The primary structure comprises 476 residues: Probable serine carboxypeptidase CPVL (476 aa).

The signal sequence occupies residues 1 to 22; sequence MVGAMWKVIVSLVLLMPGPCDG. 2 N-linked (GlcNAc...) asparagine glycosylation sites follow: Asn-81 and Asn-132. Residue Ser-204 is part of the active site. Residues Asn-307 and Asn-346 are each glycosylated (N-linked (GlcNAc...) asparagine). Residues Asp-388 and His-448 contribute to the active site.

Belongs to the peptidase S10 family. In terms of tissue distribution, expressed in macrophages but not in other leukocytes. Abundantly expressed in heart and kidney. Also expressed in spleen, leukocytes, and placenta.

Functionally, may be involved in the digestion of phagocytosed particles in the lysosome, participation in an inflammatory protease cascade, and trimming of peptides for antigen presentation. In Homo sapiens (Human), this protein is Probable serine carboxypeptidase CPVL (CPVL).